The chain runs to 476 residues: Cytochrome P450 6B5 (476 aa).

Cys-443 contributes to the heme binding site.

Belongs to the cytochrome P450 family. The cofactor is heme.

The protein resides in the endoplasmic reticulum membrane. The protein localises to the microsome membrane. It carries out the reaction an organic molecule + reduced [NADPH--hemoprotein reductase] + O2 = an alcohol + oxidized [NADPH--hemoprotein reductase] + H2O + H(+). Functionally, enables the insect to feed on furanocoumarin-producing plants and evolved as an adaptation for detoxification of xanthotoxin and other furanocoumarins. This is Cytochrome P450 6B5 (CYP6B5) from Papilio glaucus (Eastern tiger swallowtail butterfly).